A 119-amino-acid polypeptide reads, in one-letter code: Holo-[acyl-carrier-protein] synthase (119 aa).

Positions 8 and 58 each coordinate Mg(2+).

It belongs to the P-Pant transferase superfamily. AcpS family. Mg(2+) is required as a cofactor.

It localises to the cytoplasm. The enzyme catalyses apo-[ACP] + CoA = holo-[ACP] + adenosine 3',5'-bisphosphate + H(+). Transfers the 4'-phosphopantetheine moiety from coenzyme A to a Ser of acyl-carrier-protein. The sequence is that of Holo-[acyl-carrier-protein] synthase from Bacillus cereus (strain ATCC 10987 / NRS 248).